The following is a 429-amino-acid chain: Saccharopine dehydrogenase-like oxidoreductase (429 aa).

Ala-2 carries the N-acetylalanine modification. A phosphoserine mark is found at Ser-209, Ser-215, and Ser-217.

Belongs to the saccharopine dehydrogenase family.

This is Saccharopine dehydrogenase-like oxidoreductase (Sccpdh) from Rattus norvegicus (Rat).